A 448-amino-acid polypeptide reads, in one-letter code: Beclin-1 (448 aa).

Met1 is modified (N-acetylmethionine). Residues Ser14 and Ser29 each carry the phosphoserine modification. The segment at 47–72 (TTAQAKPGESQEEEANSGEEPFIETR) is disordered. 3 positions are modified to phosphoserine; by AMPK: Ser88, Ser91, and Ser94. The BH3 motif lies at 106-125 (TMENLSRRLKVTGDLFDIMS). The segment at 110-157 (LSRRLKVTGDLFDIMSGQTDVDHPLCEECTDTLLDQLDTQLNVTENEC) is interaction with BCL2 and BCL2L1 isoform Bcl-X(L). At Thr117 the chain carries Phosphothreonine; by DAPK1. Residues 140-267 (DTLLDQLDTQ…QLDKLKKTNV (128 aa)) adopt a coiled-coil conformation. The evolutionary conserved domain (ECD) stretch occupies residues 243 to 448 (DELKSVENQM…AWVSSQFYNK (206 aa)). Glycyl lysine isopeptide (Lys-Gly) (interchain with G-Cter in ubiquitin) cross-links involve residues Lys400 and Lys435. The tract at residues 423–448 (WTKALKFMLTNLKWGLAWVSSQFYNK) is required for membrane-association.

The protein belongs to the beclin family. In terms of assembly, a homodimeric form is proposed to exist; this metastable form readily transits to ATG14- or UVRAG-containing complexes with BECN1:UVRAG being more stable than BECN1:ATG14. Component of the PI3K (PI3KC3/PI3K-III/class III phosphatidylinositol 3-kinase) complex the core of which is composed of the catalytic subunit PIK3C3, the regulatory subunit PIK3R4 and BECN1 associating with additional regulatory/auxiliary subunits to form alternative complex forms. Alternative complex forms containing a fourth regulatory subunit in a mutually exclusive manner are PI3K complex I (PI3KC3-C1) containing ATG14, and PI3K complex II (PI3KC3-C2) containing UVRAG. PI3KC3-C1 displays a V-shaped architecture with PIK3R4 serving as a bridge between PIK3C3 and the ATG14:BECN1 subcomplex. Both, PI3KC3-C1 and PI3KC3-C2, can associate with further regulatory subunits, such as RUBCN, SH3GLB1/Bif-1 and AMBRA1. PI3KC3-C1 probably associates with PIK3CB. Forms a complex with PPP2CA and AMBRA1; AMBRA1 and BECN1 components of the complex regulate MYC stability via different pathways. Component of the complex, at least composed of LRPPRC, BECN1 and BCL2; the interactions prevent BECN1 from forming an autophagy-inducing complex with PIK3C3. Interacts with AMBRA1, GOPC, GRID2. Interacts with BCL2 and BCL2L1 isoform Bcl-X(L); the interaction inhibits BECN1 function in promoting autophagy by interfering with the formation of the PI3K complex. Interacts with cytosolic HMGB1; inhibits the interaction of BECN1 and BCL2 leading to promotion of autophagy. Interacts with USP10, USP13, DAPK1, RAB39A. Interacts with SLAMF1. Interacts with the poly-Gln domain of ATXN3; the interaction causes deubiquitination at Lys-400 and stabilizes BECN1. Interacts with VMP1. Interacts with TRIM5; the interaction causes activation of BECN1 by causing its dissociation from its inhibitors BCL2 and TAB2. Interacts with active ULK1 (phosphorylated on 'Ser-317') and MEFV simultaneously. Interacts with WDR81 and WDR91; negatively regulates the PI3 kinase/PI3K activity associated with endosomal membranes. Interacts with LAPTM4B; competes with EGFR for LAPTM4B binding; regulates EGFR activity. Interacts with TRIM50. Interacts with TRIM16. Interacts with ATG14; this interaction is increased in the absence of TMEM39A. Interacts with WASHC1; preventing interaction with AMBRA1 and the DCX(AMBRA1) complex and subsequent ubiquitination. Interacts with TRIM17. Interacts with BCL2L10/BCL-B (via BH1 domain). Interacts with SH3BGRL. Interacts with IRGM; enhancing BECN1-interacting partners and influencing the composition of the BECN1 complex. Interacts with ARMC3. Interacts with LRPPRC. In terms of processing, phosphorylation at Thr-117 by DAPK1 reduces its interaction with BCL2 and BCL2L1 and promotes induction of autophagy. In response to autophagic stimuli, phosphorylated at serine residues by AMPK in an ATG14-dependent manner, and this phosphorylation is critical for maximally efficient autophagy. Polyubiquitinated by NEDD4, both with 'Lys-11'- and 'Lys-63'-linkages. 'Lys-11'-linked polyubiquitination leads to degradation and is enhanced when the stabilizing interaction partner VPS34 is depleted. Deubiquitinated by USP10 and USP13, leading to stabilize the PIK3C3/VPS34-containing complexes. Polyubiquitinated at Lys-400 with 'Lys-48'-linkages. 'Lys-48'-linked polyubiquitination of Lys-400 leads to degradation. Deubiquitinated by ATXN3, leading to stabilization. Ubiquitinated at Lys-435 via 'Lys-63'-linkage by the DCX(AMBRA1) complex, thereby increasing the association between BECN1 and PIK3C3 to promote PIK3C3 activity. 'Lys-48'-linked ubiquitination by RNF216 leads to proteasomal degradation and autophagy inhibition. Post-translationally, proteolytically processed by caspases including CASP8 and CASP3; the C-terminal fragments lack autophagy-inducing capacity and are proposed to induce apoptosis. Thus the cleavage is proposed to be an determinant to switch from autophagy to apoptosis pathways affecting cellular homeostasis including viral infections and survival of tumor cells.

The protein resides in the cytoplasm. It localises to the golgi apparatus. Its subcellular location is the trans-Golgi network membrane. It is found in the endosome membrane. The protein localises to the endoplasmic reticulum membrane. The protein resides in the mitochondrion membrane. It localises to the cytoplasmic vesicle. Its subcellular location is the autophagosome. It is found in the mitochondrion. The protein localises to the nucleus. In terms of biological role, plays a central role in autophagy. Acts as a core subunit of the PI3K complex that mediates formation of phosphatidylinositol 3-phosphate; different complex forms are believed to play a role in multiple membrane trafficking pathways: PI3KC3-C1 is involved in initiation of autophagosomes and PI3KC3-C2 in maturation of autophagosomes and endocytosis. Involved in regulation of degradative endocytic trafficking and required for the abscission step in cytokinesis, probably in the context of PI3KC3-C2. Essential for the formation of PI3KC3-C2 but not PI3KC3-C1 PI3K complex forms. Involved in endocytosis. May play a role in antiviral host defense. Functionally, beclin-1-C 35 kDa localized to mitochondria can promote apoptosis; it induces the mitochondrial translocation of BAX and the release of proapoptotic factors. The chain is Beclin-1 (Becn1) from Rattus norvegicus (Rat).